Here is a 592-residue protein sequence, read N- to C-terminus: Inactive metallocarboxypeptidase ECM14 (592 aa).

The signal sequence occupies residues 1 to 21 (MRQFTHGTLLAILALANTISA). A propeptide spanning residues 22 to 174 (IPSFSANNYP…QTVYESYPSS (153 aa)) is cleaved from the precursor. The span at 170-179 (SYPSSSQRPT) shows a compositional bias: polar residues. A disordered region spans residues 170-191 (SYPSSSQRPTDNGRGFLPSRES). The Peptidase M14 domain maps to 202–521 (DYQPLSVIGP…NAVMVLAKFL (320 aa)). Zn(2+)-binding residues include His264 and Glu267. Residues 264 to 267 (HARE), Arg322, and 339 to 340 (DR) contribute to the substrate site. Cys333 and Cys356 are oxidised to a cystine. N-linked (GlcNAc...) asparagine glycosylation is present at Asn349. His396 is a binding site for Zn(2+). A substrate-binding site is contributed by 397–398 (SY). The interval 542-592 (ADKPILDDGDDDEEEDGQDKKDDSWIPDEYKNDNDHDDDDDGWGLRRRRKR) is disordered. The span at 548-558 (DDGDDDEEEDG) shows a compositional bias: acidic residues. The span at 559-575 (QDKKDDSWIPDEYKNDN) shows a compositional bias: basic and acidic residues.

The protein belongs to the peptidase M14 family. The cofactor is Zn(2+).

The protein localises to the vacuole. Its subcellular location is the secreted. Inactive carboxypeptidase that may play a role in cell wall organization and biogenesis. This Ajellomyces dermatitidis (strain ER-3 / ATCC MYA-2586) (Blastomyces dermatitidis) protein is Inactive metallocarboxypeptidase ECM14 (ECM14).